The chain runs to 356 residues: Phosphate acyltransferase (356 aa).

This sequence belongs to the PlsX family. As to quaternary structure, homodimer. Probably interacts with PlsY.

It localises to the cytoplasm. It carries out the reaction a fatty acyl-[ACP] + phosphate = an acyl phosphate + holo-[ACP]. The protein operates within lipid metabolism; phospholipid metabolism. Functionally, catalyzes the reversible formation of acyl-phosphate (acyl-PO(4)) from acyl-[acyl-carrier-protein] (acyl-ACP). This enzyme utilizes acyl-ACP as fatty acyl donor, but not acyl-CoA. This Mesorhizobium japonicum (strain LMG 29417 / CECT 9101 / MAFF 303099) (Mesorhizobium loti (strain MAFF 303099)) protein is Phosphate acyltransferase.